A 155-amino-acid chain; its full sequence is Large ribosomal subunit protein uL22 (155 aa).

Belongs to the universal ribosomal protein uL22 family. As to quaternary structure, part of the 50S ribosomal subunit.

Its function is as follows. This protein binds specifically to 23S rRNA. It makes multiple contacts with different domains of the 23S rRNA in the assembled 50S subunit and ribosome. Functionally, the globular domain of the protein is located near the polypeptide exit tunnel on the outside of the subunit, while an extended beta-hairpin is found that lines the wall of the exit tunnel in the center of the 70S ribosome. This is Large ribosomal subunit protein uL22 from Archaeoglobus fulgidus (strain ATCC 49558 / DSM 4304 / JCM 9628 / NBRC 100126 / VC-16).